The following is a 343-amino-acid chain: UDP-glucuronic acid decarboxylase 6 (343 aa).

The interval 1 to 22 (MASNSSNGTTTTKPPPMPSPLR) is disordered. Ala-2 carries the N-acetylalanine modification. 62 to 87 (DNYFTGSKDNLKKWIGHPRFELIRHD) is an NAD(+) binding site. Arg-171 contacts substrate. Residue Tyr-174 is the Proton acceptor of the active site. Position 174 to 178 (174 to 178 (YDEGK)) interacts with NAD(+). Asn-203 is a binding site for substrate. Arg-215 is a binding site for NAD(+). Residues 216–220 (VVSNF), 233–240 (QKPGTQTR), and 300–304 (DPRQR) each bind substrate.

This sequence belongs to the NAD(P)-dependent epimerase/dehydratase family. UDP-glucuronic acid decarboxylase subfamily. NAD(+) is required as a cofactor.

It localises to the cytoplasm. It carries out the reaction UDP-alpha-D-glucuronate + H(+) = UDP-alpha-D-xylose + CO2. It functions in the pathway nucleotide-sugar biosynthesis; UDP-alpha-D-xylose biosynthesis; UDP-alpha-D-xylose from UDP-alpha-D-glucuronate: step 1/1. In terms of biological role, catalyzes the NAD-dependent decarboxylation of UDP-glucuronic acid to UDP-xylose. Necessary for the biosynthesis of the core tetrasaccharide in glycosaminoglycan biosynthesis. In Arabidopsis thaliana (Mouse-ear cress), this protein is UDP-glucuronic acid decarboxylase 6 (UXS6).